The primary structure comprises 374 residues: Protein STRICTOSIDINE SYNTHASE-LIKE 10 (374 aa).

Positions 1–18 (MTMMIITVFLTVIAAVLA) are cleaved as a signal peptide. N-linked (GlcNAc...) asparagine glycosylation is present at Asn-50.

It belongs to the strictosidine synthase family.

The protein localises to the vacuole. The protein is Protein STRICTOSIDINE SYNTHASE-LIKE 10 of Arabidopsis thaliana (Mouse-ear cress).